The chain runs to 151 residues: Natriuretic peptides A (151 aa).

The signal sequence occupies residues 1–25; that stretch reads MSSFSTTTVSFLLLLAFQLLGQTRA. Positions 62 to 105 are disordered; it reads VLSEPNEEAGAALSPLPEVPPWTGEVSPAQRDGGALGRGPWDSS. The propeptide occupies 93 to 103; that stretch reads DGGALGRGPWD. The residue at position 129 (Ser129) is a Phosphoserine. Cysteines 130 and 146 form a disulfide. Positions 147 to 151 are important for degradation of atrial natriuretic peptide by IDE; sequence NSFRY.

It belongs to the natriuretic peptide family. As to quaternary structure, homodimer; disulfide-linked antiparallel dimer. The precursor molecule is proteolytically cleaved by CORIN at Arg-123 to produce atrial natriuretic peptide. Undergoes further proteolytic cleavage by unknown proteases to give rise to long-acting natriuretic peptide, vessel dilator and kaliuretic peptide. Additional processing gives rise to the auriculin and atriopeptin peptides. In the kidneys, alternative processing by an unknown protease results in the peptide urodilatin. In terms of processing, cleavage by MME initiates degradation of the factor and thereby regulates its activity. Degraded by IDE (in vitro). During IDE degradation, the resulting products can temporarily stimulate NPR2 to produce cGMP, before the fragments are completely degraded and inactivated by IDE (in vitro). Post-translationally, degraded by IDE. Phosphorylation on Ser-129 decreases vasorelaxant activity. Detected in the kidney distal tubular cells (at protein level). Present in urine (at protein level). As to expression, detected in atrial and ventricular plasma samples, and in adipocytes (at protein level). Detected in urine in one study. However, was not detected in urine in another study. In the brain, predominantly expressed in the gray matter with very weak expression in the white matter (at protein level). Localizes to astrocyte-like structures throughout the white matter, and in the cerebral vessels detected in the leptomeningeal and parenchymal vessels, and endothelium and smooth muscle layers (at protein level). Relatively low levels of expression in the kidneys compared to urodilatin (at protein level).

The protein resides in the secreted. Its subcellular location is the perikaryon. It is found in the cell projection. Hormone that plays a key role in mediating cardio-renal homeostasis, and is involved in vascular remodeling and regulating energy metabolism. Acts by specifically binding and stimulating NPR1 to produce cGMP, which in turn activates effector proteins, such as PRKG1, that drive various biological responses. Regulates vasodilation, natriuresis, diuresis and aldosterone synthesis and is therefore essential for regulating blood pressure, controlling the extracellular fluid volume and maintaining the fluid-electrolyte balance. Also involved in inhibiting cardiac remodeling and cardiac hypertrophy by inducing cardiomyocyte apoptosis and attenuating the growth of cardiomyocytes and fibroblasts. Plays a role in female pregnancy by promoting trophoblast invasion and spiral artery remodeling in uterus, and thus prevents pregnancy-induced hypertension. In adipose tissue, acts in various cGMP- and PKG-dependent pathways to regulate lipid metabolism and energy homeostasis. This includes up-regulating lipid metabolism and mitochondrial oxygen utilization by activating the AMP-activated protein kinase (AMPK), and increasing energy expenditure by acting via MAPK11 to promote the UCP1-dependent thermogenesis of brown adipose tissue. Binds the clearance receptor NPR3 which removes the hormone from circulation. In terms of biological role, may have a role in cardio-renal homeostasis through regulation of natriuresis, diuresis, vasodilation, and inhibiting aldosterone synthesis. In vitro, promotes the production of cGMP and induces vasodilation. May promote natriuresis, at least in part, by enhancing prostaglandin E2 synthesis resulting in the inhibition of renal Na+-K+-ATPase. However reports on the involvement of this peptide in mammal blood volume and blood pressure homeostasis are conflicting; according to a report, in vivo it is not sufficient to activate cGMP and does not inhibit collecting duct transport nor effect diuresis and natriuresis. Appears to bind to specific receptors that are distinct from the receptors bound by atrial natriuretic peptide and vessel dilator. Possibly enhances protein excretion in urine by decreasing proximal tubular protein reabsorption. Its function is as follows. May have a role in cardio-renal homeostasis through regulation of natriuresis, diuresis, and vasodilation. In vitro, promotes the production of cGMP and induces vasodilation. May promote natriuresis, at least in part, by enhancing prostaglandin E2 synthesis resulting in the inhibition of renal Na+-K+-ATPase. However reports on the involvement of this peptide in mammal blood volume and blood pressure homeostasis are conflicting; according to a report it is not sufficient to activate cGMP and does not inhibit collecting duct transport nor effect diuresis and natriuresis. Appears to bind to specific receptors that are distinct from the receptors bound by the atrial natriuretic and long-acting natriuretic peptides. Possibly functions in protein excretion in urine by maintaining the integrity of the proximal tubules and enhancing protein excretion by decreasing proximal tubular protein reabsorption. Functionally, may have a role in cardio-renal homeostasis through regulation of diuresis and inhibiting aldosterone synthesis. In vitro, promotes the production of cGMP and induces vasodilation. May promote natriuresis, at least in part, by enhancing prostaglandin E2 synthesis resulting in the inhibition of renal Na+-K+-ATPase. May have a role in potassium excretion but not sodium excretion (natriuresis). Possibly enhances protein excretion in urine by decreasing proximal tubular protein reabsorption. Hormone produced in the kidneys that appears to be important for maintaining cardio-renal homeostasis. Mediates vasodilation, natriuresis and diuresis primarily in the renal system, in order to maintain the extracellular fluid volume and control the fluid-electrolyte balance. Specifically binds and stimulates cGMP production by renal transmembrane receptors, likely NPR1. Urodilatin not ANP, may be the natriuretic peptide responsible for the regulation of sodium and water homeostasis in the kidney. In terms of biological role, may have a role in cardio-renal homeostasis through regulation of natriuresis and vasodilation. In vivo promotes natriuresis and in vitro, vasodilates renal artery strips. Its function is as follows. May have a role in cardio-renal homeostasis through regulation of regulation of natriuresis and vasodilation. In vivo promotes natriuresis. In vitro, vasodilates intestinal smooth muscle but not smooth muscle strips. Functionally, may have a role in cardio-renal homeostasis through regulation of natriuresis and vasodilation. In vivo promotes natriuresis. In vitro, selectively vasodilates intestinal and vascular smooth muscle strips. May have a role in cardio-renal homeostasis through regulation of natriuresis and vasodilation. In vivo promotes natriuresis. In vitro, selectively vasodilates intestinal smooth muscle but not vascular smooth muscle strips. The chain is Natriuretic peptides A (NPPA) from Homo sapiens (Human).